Reading from the N-terminus, the 406-residue chain is Tryptophan 2,3-dioxygenase (406 aa).

Ser-19 bears the Phosphoserine mark. Substrate is bound by residues 72-76 and Arg-144; that span reads FIITH. His-328 serves as a coordination point for heme. Thr-342 serves as a coordination point for substrate.

Belongs to the tryptophan 2,3-dioxygenase family. Homotetramer. Dimer of dimers. Heme serves as cofactor.

It catalyses the reaction L-tryptophan + O2 = N-formyl-L-kynurenine. The protein operates within amino-acid degradation; L-tryptophan degradation via kynurenine pathway; L-kynurenine from L-tryptophan: step 1/2. In terms of biological role, heme-dependent dioxygenase that catalyzes the oxidative cleavage of the L-tryptophan (L-Trp) pyrrole ring and converts L-tryptophan to N-formyl-L-kynurenine. Catalyzes the oxidative cleavage of the indole moiety. This is Tryptophan 2,3-dioxygenase from Mus musculus (Mouse).